Consider the following 422-residue polypeptide: Glutamyl-tRNA reductase (422 aa).

Substrate contacts are provided by residues 49 to 52 (TCNR), Ser-110, 115 to 117 (EPQ), and Gln-121. Cys-50 (nucleophile) is an active-site residue. 190–195 (GAGETI) is an NADP(+) binding site.

The protein belongs to the glutamyl-tRNA reductase family. In terms of assembly, homodimer.

The catalysed reaction is (S)-4-amino-5-oxopentanoate + tRNA(Glu) + NADP(+) = L-glutamyl-tRNA(Glu) + NADPH + H(+). It functions in the pathway porphyrin-containing compound metabolism; protoporphyrin-IX biosynthesis; 5-aminolevulinate from L-glutamyl-tRNA(Glu): step 1/2. Catalyzes the NADPH-dependent reduction of glutamyl-tRNA(Glu) to glutamate 1-semialdehyde (GSA). The protein is Glutamyl-tRNA reductase of Colwellia psychrerythraea (strain 34H / ATCC BAA-681) (Vibrio psychroerythus).